A 468-amino-acid chain; its full sequence is 6-phosphogluconate dehydrogenase, decarboxylating (468 aa).

NADP(+)-binding positions include G10–G15, N33–T35, V74–S76, and N102. Substrate contacts are provided by residues N102 and S128–G130. Residue K182 is the Proton acceptor of the active site. H185 to N186 is a substrate binding site. E189 serves as the catalytic Proton donor. Positions 190, 259, 286, 445, and 451 each coordinate substrate.

This sequence belongs to the 6-phosphogluconate dehydrogenase family. Homodimer.

It catalyses the reaction 6-phospho-D-gluconate + NADP(+) = D-ribulose 5-phosphate + CO2 + NADPH. The protein operates within carbohydrate degradation; pentose phosphate pathway; D-ribulose 5-phosphate from D-glucose 6-phosphate (oxidative stage): step 3/3. Catalyzes the oxidative decarboxylation of 6-phosphogluconate to ribulose 5-phosphate and CO(2), with concomitant reduction of NADP to NADPH. This Buchnera aphidicola subsp. Acyrthosiphon pisum (strain APS) (Acyrthosiphon pisum symbiotic bacterium) protein is 6-phosphogluconate dehydrogenase, decarboxylating (gnd).